The primary structure comprises 435 residues: Trigger factor (435 aa).

The region spanning 162-247 (GDRINIDYRG…LSGVESSKLP (86 aa)) is the PPIase FKBP-type domain.

The protein belongs to the FKBP-type PPIase family. Tig subfamily.

The protein resides in the cytoplasm. It carries out the reaction [protein]-peptidylproline (omega=180) = [protein]-peptidylproline (omega=0). Its function is as follows. Involved in protein export. Acts as a chaperone by maintaining the newly synthesized protein in an open conformation. Functions as a peptidyl-prolyl cis-trans isomerase. This chain is Trigger factor, found in Nitrosospira multiformis (strain ATCC 25196 / NCIMB 11849 / C 71).